A 127-amino-acid chain; its full sequence is Aspartate 1-decarboxylase (127 aa).

The active-site Schiff-base intermediate with substrate; via pyruvic acid is the Ser25. Ser25 is subject to Pyruvic acid (Ser). Thr57 contacts substrate. Residue Tyr58 is the Proton donor of the active site. Residue 73–75 (GAA) participates in substrate binding.

Belongs to the PanD family. Heterooctamer of four alpha and four beta subunits. It depends on pyruvate as a cofactor. Post-translationally, is synthesized initially as an inactive proenzyme, which is activated by self-cleavage at a specific serine bond to produce a beta-subunit with a hydroxyl group at its C-terminus and an alpha-subunit with a pyruvoyl group at its N-terminus.

Its subcellular location is the cytoplasm. It catalyses the reaction L-aspartate + H(+) = beta-alanine + CO2. Its pathway is cofactor biosynthesis; (R)-pantothenate biosynthesis; beta-alanine from L-aspartate: step 1/1. In terms of biological role, catalyzes the pyruvoyl-dependent decarboxylation of aspartate to produce beta-alanine. This chain is Aspartate 1-decarboxylase, found in Staphylococcus carnosus (strain TM300).